A 206-amino-acid polypeptide reads, in one-letter code: High frequency lysogenization protein HflD homolog (206 aa).

It belongs to the HflD family.

Its subcellular location is the cytoplasm. The protein localises to the cell inner membrane. This chain is High frequency lysogenization protein HflD homolog, found in Ectopseudomonas mendocina (strain ymp) (Pseudomonas mendocina).